A 523-amino-acid chain; its full sequence is FAD-dependent monooxygenase drtC (523 aa).

Residues 77–252 (TSLNSACIVL…TNFEVRAFPQ (176 aa)) form the FAD-binding PCMH-type domain.

It belongs to the oxygen-dependent FAD-linked oxidoreductase family. FAD is required as a cofactor.

Its pathway is secondary metabolite biosynthesis; terpenoid biosynthesis. Its function is as follows. FAD-dependent monooxygenase; part of the gene cluster that mediates the biosynthesis of various drimane-type sesquiterpene esters, compounds that exhibit diverse biological activities and are widely present in eukaryotes. The pathway begins with the synthesis of the backbone drimenol by the terpene cyclase drtB using farnesyl pyrophosphate (FPP) as substrate. The cytochrome P450 monooxygenase drtD is then responsible for the hydroxylations at C-6, C-9 and C-12, as well as the oxidation of hydroxyl groups at C-6 and C-11 to a ketone and an aldehyde, respectively. Then, the biosynthesis can go in two directions, either the hydroxylated drimenol is further hydroxylated at C-2 and C-3 by an enzyme(s) not associated with the drt cluster, or the FAD-binding oxidoreductase drtC further oxidizes C-11 or C-12 to form the butyrolactone ring. DrtB, drtD and drtC are solely responsible for the formation of the different drimane structures observed during drimane sesquiterpenes biosynthesis. The polyketide synthase drtA synthesizes different lengths (C6 and C8) of PKS chains, which are then oxidized to varying degrees by the short-chain dehydrogenase drtF. Finally, these PKS chains are transferred onto drimane sesquiterpenes by the acyltransferase drtE, forming the sesquiterpene esters. In addition to the different fatty acyl-CoA chains produced by drtA, drtE is also able to use cinnamoyl-CoA as a substrate. This Aspergillus calidoustus protein is FAD-dependent monooxygenase drtC.